Here is a 264-residue protein sequence, read N- to C-terminus: MIHSKKLTLGICLVLLIILIVGYVIMTKTNGRNAQIKDTFNQTLKLYPTKNLDDFYDKEGFRDQEFKKGDKGTWIVNSEMVIEPKGKDMETRGMVLYINRNTRTTKGYYFISEMTDDSNGRPKDDEKRYPVKMEHNKIIPTKPLPNDKLRKEIENFKFFVQYGDFKDINDYKDGDISYNPNVPSYSAKYQLKNDDYNVKQLRKRYNIPTNKAPKLLIKGDGDLKGSSVGSKNLEFTFVENKEENIYFTDSVQYTSSEDTSYESN.

The chain crosses the membrane as a helical span at residues 7–27 (LTLGICLVLLIILIVGYVIMT).

The protein belongs to the staphylococcal tandem lipoprotein family.

Its subcellular location is the cell membrane. This is an uncharacterized protein from Staphylococcus aureus (strain N315).